The following is a 780-amino-acid chain: Pentatricopeptide repeat-containing protein At1g79540 (780 aa).

PPR repeat units follow at residues 91–125 (SRESFGLVIDMLSEDNGCDLYWQTLEELKSGGVSV), 126–160 (DSYCFCVLISAYAKMGMAEKAVESFGRMKEFDCRP), 161–196 (DVFTYNVILRVMMREEVFFMLAFAVYNEMLKCNCSP), 197–231 (NLYTFGILMDGLYKKGRTSDAQKMFDDMTGRGISP), 232–266 (NRVTYTILISGLCQRGSADDARKLFYEMQTSGNYP), 267–301 (DSVAHNALLDGFCKLGRMVEAFELLRLFEKDGFVL), 302–336 (GLRGYSSLIDGLFRARRYTQAFELYANMLKKNIKP), 337–371 (DIILYTILIQGLSKAGKIEDALKLLSSMPSKGISP), 372–406 (DTYCYNAVIKALCGRGLLEEGRSLQLEMSETESFP), 407–441 (DACTHTILICSMCRNGLVREAEEIFTEIEKSGCSP), 442–476 (SVATFNALIDGLCKSGELKEARLLLHKMEVGRPAS), 481–515 (LSHSGNRSFDTMVESGSILKAYRDLAHFADTGSSP), 516–550 (DIVSYNVLINGFCRAGDIDGALKLLNVLQLKGLSP), 551–585 (DSVTYNTLINGLHRVGREEEAFKLFYAKDDFRHSP), 653–687 (TLGPYTIWLIGLCQSGRFHEALMVFSVLREKKILV), 688–722 (TPPSCVKLIHGLCKREQLDAAIEVFLYTLDNNFKL), and 723–758 (MPRVCNYLLSSLLESTEKMEIVSQLTNRMERAGYNV).

This sequence belongs to the PPR family. P subfamily.

The chain is Pentatricopeptide repeat-containing protein At1g79540 from Arabidopsis thaliana (Mouse-ear cress).